The following is a 317-amino-acid chain: HTH-type transcriptional regulator CfxR (317 aa).

Residues 8–65 (LTLRQLQIFVTVARHASFVRAAEELHLTQPAVSMQVKQLESVVGMALFERVKGQLTLT) form the HTH lysR-type domain. Residues 25-44 (FVRAAEELHLTQPAVSMQVK) constitute a DNA-binding region (H-T-H motif).

This sequence belongs to the LysR transcriptional regulatory family.

In terms of biological role, trans-acting transcriptional regulator of RuBisCO genes (cfxLS) expression. In Cupriavidus necator (strain ATCC 17699 / DSM 428 / KCTC 22496 / NCIMB 10442 / H16 / Stanier 337) (Ralstonia eutropha), this protein is HTH-type transcriptional regulator CfxR (cfxR).